The primary structure comprises 603 residues: Elongation factor 4 (603 aa).

The tr-type G domain occupies 6–188; that stretch reads KYVRNFSIIA…DIVKNVPAPI (183 aa). GTP is bound by residues 18-23 and 135-138; these read DHGKST and NKID.

This sequence belongs to the TRAFAC class translation factor GTPase superfamily. Classic translation factor GTPase family. LepA subfamily.

It is found in the cell membrane. The catalysed reaction is GTP + H2O = GDP + phosphate + H(+). Functionally, required for accurate and efficient protein synthesis under certain stress conditions. May act as a fidelity factor of the translation reaction, by catalyzing a one-codon backward translocation of tRNAs on improperly translocated ribosomes. Back-translocation proceeds from a post-translocation (POST) complex to a pre-translocation (PRE) complex, thus giving elongation factor G a second chance to translocate the tRNAs correctly. Binds to ribosomes in a GTP-dependent manner. This Finegoldia magna (strain ATCC 29328 / DSM 20472 / WAL 2508) (Peptostreptococcus magnus) protein is Elongation factor 4.